A 182-amino-acid chain; its full sequence is MSKQLNPAVPDQPIVLGKMGSTYGIRGWLRVFSSTENAESIFDYQPWFIQQAGKWQHVELEDWKRHSQDLIIKVKGVDDRDAANLLTNCEIFVDSTQLPALEEDDYYWKDLMGCQVVTTTGYELGKIIDMMETGSNDVMVVKANLKDAFGMKERLVPFLHGQVIKKVDLTAQRVEVDWDPGF.

Positions 102 to 182 (EEDDYYWKDL…RVEVDWDPGF (81 aa)) constitute a PRC barrel domain.

The protein belongs to the RimM family. Binds ribosomal protein uS19.

The protein resides in the cytoplasm. In terms of biological role, an accessory protein needed during the final step in the assembly of 30S ribosomal subunit, possibly for assembly of the head region. Essential for efficient processing of 16S rRNA. May be needed both before and after RbfA during the maturation of 16S rRNA. It has affinity for free ribosomal 30S subunits but not for 70S ribosomes. The protein is Ribosome maturation factor RimM of Yersinia pseudotuberculosis serotype IB (strain PB1/+).